The following is a 322-amino-acid chain: Pre-mRNA-splicing factor NTR2 (322 aa).

Residues 1–30 (MAIKKRNKIRLPSGSPEEVGIDGSAHKPMQ) are disordered. Position 40 is a phosphoserine (S40). The interval 113-137 (LLSDSSEAGSSSEGEHISSIPTRGE) is disordered. Low complexity predominate over residues 115-132 (SDSSEAGSSSEGEHISSI). Residues S153 and S197 each carry the phosphoserine modification.

As to quaternary structure, component of the NTR complex (NTC-related complex), composed of NTR1, NTR2 and PRP43. Interacts with CLF1, NTR1 and PRP43.

It is found in the cytoplasm. The protein resides in the nucleus. Its function is as follows. Involved in pre-mRNA splicing and spliceosome disassembly. Promotes release of excised lariat intron from the spliceosome by acting as a receptor for PRP43. This targeting of PRP43 leads to disassembly of the spliceosome with the separation of the U2, U5, U6 snRNPs and the NTC complex. This is Pre-mRNA-splicing factor NTR2 (NTR2) from Saccharomyces cerevisiae (strain ATCC 204508 / S288c) (Baker's yeast).